We begin with the raw amino-acid sequence, 128 residues long: Modulator protein MzrA (128 aa).

The Cytoplasmic segment spans residues 1–13 (MLALLRPYLSTRV). Residues 14–34 (LCVLVVCFSALMLVAFIPTLF) form a helical membrane-spanning segment. The Periplasmic portion of the chain corresponds to 35–128 (RNDTALQIRA…RLSLRKQSVG (94 aa)).

Belongs to the MzrA family. In terms of assembly, interacts with EnvZ.

It is found in the cell inner membrane. Functionally, modulates the activity of the EnvZ/OmpR two-component regulatory system, probably by directly modulating EnvZ enzymatic activity and increasing stability of phosphorylated OmpR. This Erwinia billingiae (strain Eb661) protein is Modulator protein MzrA.